The sequence spans 392 residues: MIILKADYKKYNVSELEKLRMDEEKFYETFDNAILLQTCNRVEIIFDADSLEEIKGIENIDLEKFDILFGDKAIEHLFRVACGLESMIVGEDQILGQLKNAYLKAKEKGRISKKLEKIILKAIHTGQRARVETKINEGGVSIGSAAVELAEKIFGLEGKNVLLIGAGEMANLVIKALKEKNIKAIIVANRTYEKAEKLAKELGGMAIKFDKLEEALRYADIVISATGAPHPILNKERLKNAGKTIIIDIANPRDTTDDIRELPDIFLFTIDDLRLVAEENLKKRKEEIPKVEMIICEELERLKEFLDKMRFETAIKELGQYIENVRKKEVEKAKKILKNKNKPVEEVLEDFSKALCKRIIYDIIKIFENVEDKEVFECLAKEFKKLGNKNKN.

Residues 38–41 (TCNR), S86, 91–93 (EDQ), and Q97 contribute to the substrate site. Catalysis depends on C39, which acts as the Nucleophile. 165 to 170 (GAGEMA) is a binding site for NADP(+).

Belongs to the glutamyl-tRNA reductase family. In terms of assembly, homodimer.

The enzyme catalyses (S)-4-amino-5-oxopentanoate + tRNA(Glu) + NADP(+) = L-glutamyl-tRNA(Glu) + NADPH + H(+). It participates in porphyrin-containing compound metabolism; protoporphyrin-IX biosynthesis; 5-aminolevulinate from L-glutamyl-tRNA(Glu): step 1/2. Catalyzes the NADPH-dependent reduction of glutamyl-tRNA(Glu) to glutamate 1-semialdehyde (GSA). The sequence is that of Glutamyl-tRNA reductase from Methanocaldococcus jannaschii (strain ATCC 43067 / DSM 2661 / JAL-1 / JCM 10045 / NBRC 100440) (Methanococcus jannaschii).